Consider the following 149-residue polypeptide: Antitoxin HigA1 (149 aa).

Residues 42 to 96 form the HTH cro/C1-type domain; it reads LIALRKHCQLSQVEVAKRMGVRQPTVSGFEKEPSDPKLSTLQRYARALDARLRLV. A DNA-binding region (H-T-H motif) is located at residues 53–72; it reads QVEVAKRMGVRQPTVSGFEK.

Interacts with SecB-like chaperone MT2006.

Functionally, antitoxin component of an atypical, type II toxin-antitoxin chaperone (TAC) system. Probably neutralizes the toxic effects of cognate toxin HigB1, which also requires SecB-like chaperone MT2006 (AC Q7D7P7). Autorepresses its operon (higB1-higA1-MT2006). The chain is Antitoxin HigA1 from Mycobacterium tuberculosis (strain CDC 1551 / Oshkosh).